The primary structure comprises 194 residues: Holliday junction branch migration complex subunit RuvA (194 aa).

The tract at residues 1–64 (MISRLTGKLV…EDAHLLFGFA (64 aa)) is domain I. The segment at 65–143 (TAEERKTFRQ…AHTVTDGLFA (79 aa)) is domain II. Residues 144–147 (AAPA) form a flexible linker region. A domain III region spans residues 147–194 (AADETEDIVSTLLALGYSEREAKAAVKGVPEGTDVGEGVRLALKNLLK).

It belongs to the RuvA family. Homotetramer. Forms an RuvA(8)-RuvB(12)-Holliday junction (HJ) complex. HJ DNA is sandwiched between 2 RuvA tetramers; dsDNA enters through RuvA and exits via RuvB. An RuvB hexamer assembles on each DNA strand where it exits the tetramer. Each RuvB hexamer is contacted by two RuvA subunits (via domain III) on 2 adjacent RuvB subunits; this complex drives branch migration. In the full resolvosome a probable DNA-RuvA(4)-RuvB(12)-RuvC(2) complex forms which resolves the HJ.

The protein localises to the cytoplasm. The RuvA-RuvB-RuvC complex processes Holliday junction (HJ) DNA during genetic recombination and DNA repair, while the RuvA-RuvB complex plays an important role in the rescue of blocked DNA replication forks via replication fork reversal (RFR). RuvA specifically binds to HJ cruciform DNA, conferring on it an open structure. The RuvB hexamer acts as an ATP-dependent pump, pulling dsDNA into and through the RuvAB complex. HJ branch migration allows RuvC to scan DNA until it finds its consensus sequence, where it cleaves and resolves the cruciform DNA. In Neisseria meningitidis serogroup B (strain ATCC BAA-335 / MC58), this protein is Holliday junction branch migration complex subunit RuvA.